Reading from the N-terminus, the 197-residue chain is Protocatechuate 3,4-dioxygenase alpha chain (197 aa).

R130 contacts 3,4-dihydroxybenzoate.

This sequence belongs to the intradiol ring-cleavage dioxygenase family. As to quaternary structure, the enzyme is an oligomer of 12 copies of the alpha and beta chains. Requires Fe(3+) as cofactor.

The enzyme catalyses 3,4-dihydroxybenzoate + O2 = 3-carboxy-cis,cis-muconate + 2 H(+). Its pathway is aromatic compound metabolism; beta-ketoadipate pathway; 3-carboxy-cis,cis-muconate from 3,4-dihydroxybenzoate: step 1/1. Plays an essential role in the utilization of numerous aromatic and hydroaromatic compounds via the beta-ketoadipate pathway. This chain is Protocatechuate 3,4-dioxygenase alpha chain (pcaG), found in Burkholderia cepacia (Pseudomonas cepacia).